A 325-amino-acid polypeptide reads, in one-letter code: ATP synthase gamma chain (325 aa).

It belongs to the ATPase gamma chain family. In terms of assembly, F-type ATPases have 2 components, CF(1) - the catalytic core - and CF(0) - the membrane proton channel. CF(1) has five subunits: alpha(3), beta(3), gamma(1), delta(1), epsilon(1). CF(0) has three main subunits: a, b and c.

It is found in the cell membrane. Functionally, produces ATP from ADP in the presence of a proton gradient across the membrane. The gamma chain is believed to be important in regulating ATPase activity and the flow of protons through the CF(0) complex. This is ATP synthase gamma chain from Corynebacterium diphtheriae (strain ATCC 700971 / NCTC 13129 / Biotype gravis).